A 446-amino-acid chain; its full sequence is Protein adenylyltransferase FICD (446 aa).

Residues 1-18 are Cytoplasmic-facing; that stretch reads MAVTECEWASLGSRIGLR. The chain crosses the membrane as a helical; Signal-anchor for type II membrane protein span at residues 19–39; that stretch reads AALVLLSGSLLVVLFPLSGLE. The Lumenal portion of the chain corresponds to 40–446; that stretch reads HQYRTALNIL…ECKQTITIKT (407 aa). TPR repeat units lie at residues 94–127 and 128–161; these read AKAA…DPDH and VDAL…SPHN. The short motif at 218–223 is the Inhibitory (S/T)XXXE(G/N) motif element; that stretch reads TVAIEG. Residue Glu-222 participates in ATP binding. Asn-263 is a glycosylation site (N-linked (GlcNAc...) asparagine). The Fido domain maps to 273-408; sequence VTIDNILEIH…VRPFIRFIAK (136 aa). 304–307 contacts ATP; it reads VGHH. Residue His-351 is part of the active site. ATP contacts are provided by residues 355-362, 387-388, and Asn-395; these read DGNGRTSR and YY.

It belongs to the fic family. As to quaternary structure, homodimer. Mg(2+) is required as a cofactor. It depends on Mn(2+) as a cofactor.

Its subcellular location is the endoplasmic reticulum membrane. The enzyme catalyses L-tyrosyl-[protein] + ATP = O-(5'-adenylyl)-L-tyrosyl-[protein] + diphosphate. It carries out the reaction 3-O-(5'-adenylyl)-L-threonyl-[protein] + H2O = L-threonyl-[protein] + AMP + H(+). The catalysed reaction is L-threonyl-[protein] + ATP = 3-O-(5'-adenylyl)-L-threonyl-[protein] + diphosphate. With respect to regulation, the side chain of Glu-222 determines which of the two opposing activities (AMPylase or de-AMPylase) will take place. In response to endoplasmic reticulum stress, mediates de-AMPylase activity. Adenylyltransferase activity is inhibited by the inhibitory helix present at the N-terminus: Glu-222 binds ATP and competes with ATP-binding at Arg-362, thereby preventing adenylyltransferase activity. In unstressed cells, disengagement of Glu-222 promotes adenylyltransferase activity. Activation dissociates ATP-binding from Glu-222, allowing ordered binding of the entire ATP moiety with the alpha-phosphate in an orientation that is productive for accepting an incoming target hydroxyl side chain. In terms of biological role, protein that can both mediate the addition of adenosine 5'-monophosphate (AMP) to specific residues of target proteins (AMPylation), and the removal of the same modification from target proteins (de-AMPylation), depending on the context. The side chain of Glu-222 determines which of the two opposing activities (AMPylase or de-AMPylase) will take place. Acts as a key regulator of the ERN1/IRE1-mediated unfolded protein response (UPR) by mediating AMPylation or de-AMPylation of HSPA5/BiP. In unstressed cells, acts as an adenylyltransferase by mediating AMPylation of HSPA5/BiP at 'Thr-518', thereby inactivating it. In response to endoplasmic reticulum stress, acts as a phosphodiesterase by mediating removal of ATP (de-AMPylation) from HSPA5/BiP at 'Thr-518', leading to restore HSPA5/BiP activity. The sequence is that of Protein adenylyltransferase FICD from Xenopus tropicalis (Western clawed frog).